The sequence spans 886 residues: Cytosolic carboxypeptidase-like protein 5 (886 aa).

One can recognise a Peptidase M14 domain in the interval 157–570 (YPFSYSDCQD…AMAIAALDMA (414 aa)). Zn(2+) contacts are provided by His-252 and Glu-255. Residues 344–353 (AKSPTNQQPT) show a composition bias toward polar residues. Disordered regions lie at residues 344–363 (AKSP…APLS) and 374–401 (EAHL…KTDP). A Zn(2+)-binding site is contributed by His-434. Glu-516 (proton donor/acceptor) is an active-site residue. 2 disordered regions span residues 602 to 737 (GLTS…RNMG) and 783 to 846 (TRLQ…PAFS). Positions 621–635 (PKSNNSLPVSCSENA) are enriched in polar residues. Residues 643-654 (STGTSTGGSSSS) show a composition bias toward low complexity. The segment covering 655-666 (QQNSPQMKNSPS) has biased composition (polar residues). The segment covering 714–737 (STTSSLAPSPTLASSGPTSSRNMG) has biased composition (low complexity). Residues 805 to 815 (SSPTSPIPQTR) are compositionally biased toward polar residues. Position 841 is a phosphoserine (Ser-841).

The protein belongs to the peptidase M14 family. It depends on Zn(2+) as a cofactor. In terms of tissue distribution, widely expressed. Highly expressed in testis, and moderately in pituitary, brain, eye and kidney.

Its subcellular location is the cytoplasm. The protein resides in the cytosol. It localises to the nucleus. It is found in the cytoskeleton. The protein localises to the spindle. Its subcellular location is the midbody. The catalysed reaction is gamma-L-glutamyl-L-glutamyl-[protein] + H2O = L-glutamyl-[protein] + L-glutamate. The enzyme catalyses (L-glutamyl)(n+1)-gamma-L-glutamyl-L-glutamyl-[protein] + H2O = (L-glutamyl)(n)-gamma-L-glutamyl-L-glutamyl-[protein] + L-glutamate. It carries out the reaction C-terminal L-alpha-aminoacyl-L-glutamyl-[tubulin] + H2O = C-terminal L-alpha-aminoacyl-[tubulin] + L-glutamate. It catalyses the reaction C-terminal L-alpha-aminoacyl-L-glutamyl-L-glutamyl-[tubulin] + H2O = C-terminal L-alpha-aminoacyl-L-glutamyl-[tubulin] + L-glutamate. Metallocarboxypeptidase that mediates deglutamylation of tubulin and non-tubulin target proteins. Catalyzes the removal of polyglutamate side chains present on the gamma-carboxyl group of glutamate residues within the C-terminal tail of alpha- and beta-tubulin. Cleaves alpha- and gamma-linked polyglutamate tubulin side-chain, as well as the branching point glutamate. Also catalyzes the removal of alpha-linked glutamate residues from the carboxy-terminus of alpha-tubulin. Mediates deglutamylation of nucleotidyltransferase CGAS, leading to CGAS antiviral defense response activation. This is Cytosolic carboxypeptidase-like protein 5 from Mus musculus (Mouse).